The following is a 396-amino-acid chain: Proteinase-activated receptor 4 (396 aa).

The first 16 residues, 1-16, serve as a signal peptide directing secretion; sequence MCWPLLYPLVLGLSIS. Positions 17 to 59 are cleaved as a propeptide — removed for receptor activation; that stretch reads LAEGIQTPSIYDDVESTRGSHEGPLGPTVELKEPKSSDKPNPR. The tract at residues 28-62 is disordered; the sequence is DDVESTRGSHEGPLGPTVELKEPKSSDKPNPRGYP. A compositionally biased stretch (basic and acidic residues) spans 46–57; it reads ELKEPKSSDKPN. The Extracellular segment spans residues 60-94; that stretch reads GYPGKFCANDSDTLELPASSQALLLGWVPTRLVPA. An N-linked (GlcNAc...) asparagine glycan is attached at asparagine 68. Residues 95–115 traverse the membrane as a helical segment; sequence LYGLVVAVGLPANGLALWVLA. Residues 116–120 are Cytoplasmic-facing; the sequence is TRVPR. Residues 121-141 form a helical membrane-spanning segment; the sequence is LPSTILLMNLAVADLLLALVL. Over 142-162 the chain is Extracellular; sequence PPRLAYHLRGQRWPFGEAACR. Residues cysteine 161 and cysteine 240 are joined by a disulfide bond. Residues 163–183 form a helical membrane-spanning segment; it reads VATAALYGHMYGSVLLLAAVS. The Cytoplasmic segment spans residues 184-203; the sequence is LDRYLALVHPLRARALRGQR. Residues 204–224 traverse the membrane as a helical segment; it reads LTTGLCLVAWLSAATLALPLT. Residues 225–255 are Extracellular-facing; that stretch reads LHRQTFRLAGSDRMLCHDALPLTEQTSHWRP. The chain crosses the membrane as a helical span at residues 256-276; the sequence is AFICLAVLGCFVPLLAMGLCY. The Cytoplasmic portion of the chain corresponds to 277–295; the sequence is GATLRALAANGQRYSHALR. A helical membrane pass occupies residues 296-316; that stretch reads LTALVLFSAVASFTPSNVLLV. Topologically, residues 317–331 are extracellular; that stretch reads LHYSNPSPEAWGNLY. A helical membrane pass occupies residues 332–355; it reads GAYVPSLALSTLNSCVDPFIYYYV. Residues 356–396 lie on the Cytoplasmic side of the membrane; it reads SHEFREKVRAMLCRQPEASSSSQASREAGSRGTAICSSTLL.

This sequence belongs to the G-protein coupled receptor 1 family. A proteolytic cleavage generates a new N-terminus that functions as a tethered ligand. Highly expressed in the spleen. Slight expression in the heart, lung, skeletal muscle and kidney. No detectable expression in brain, liver or testis. Also detected in platelets.

The protein localises to the cell membrane. Functionally, receptor for activated thrombin or trypsin coupled to G proteins that stimulate phosphoinositide hydrolysis. May play a role in platelets activation. In Mus musculus (Mouse), this protein is Proteinase-activated receptor 4 (F2rl3).